The following is a 475-amino-acid chain: Aspartyl/glutamyl-tRNA(Asn/Gln) amidotransferase subunit B (475 aa).

The protein belongs to the GatB/GatE family. GatB subfamily. In terms of assembly, heterotrimer of A, B and C subunits.

It catalyses the reaction L-glutamyl-tRNA(Gln) + L-glutamine + ATP + H2O = L-glutaminyl-tRNA(Gln) + L-glutamate + ADP + phosphate + H(+). It carries out the reaction L-aspartyl-tRNA(Asn) + L-glutamine + ATP + H2O = L-asparaginyl-tRNA(Asn) + L-glutamate + ADP + phosphate + 2 H(+). In terms of biological role, allows the formation of correctly charged Asn-tRNA(Asn) or Gln-tRNA(Gln) through the transamidation of misacylated Asp-tRNA(Asn) or Glu-tRNA(Gln) in organisms which lack either or both of asparaginyl-tRNA or glutaminyl-tRNA synthetases. The reaction takes place in the presence of glutamine and ATP through an activated phospho-Asp-tRNA(Asn) or phospho-Glu-tRNA(Gln). The sequence is that of Aspartyl/glutamyl-tRNA(Asn/Gln) amidotransferase subunit B from Bacillus cereus (strain ZK / E33L).